Here is a 494-residue protein sequence, read N- to C-terminus: UPF0371 protein Sez_1293 (494 aa).

It belongs to the UPF0371 family.

The polypeptide is UPF0371 protein Sez_1293 (Streptococcus equi subsp. zooepidemicus (strain MGCS10565)).